A 1164-amino-acid chain; its full sequence is FH1/FH2 domain-containing protein 1 (1164 aa).

The GBD/FH3 domain maps to 53–458; the sequence is AQIPAVHRLL…AAETEKQVAL (406 aa). Disordered stretches follow at residues 340–411 and 470–500; these read DIEE…VGPP and MPNE…QSPA. Residues 355–368 show a composition bias toward basic and acidic residues; the sequence is KPSSEEGKRSRRSL. Position 367 is a phosphoserine (S367). The segment covering 402 to 411 has biased composition (low complexity); it reads GPASSPVGPP. S486 carries the phosphoserine modification. Residues 487–615 enclose the FH1 domain; it reads PETAPAARTP…LAAPLPHSVP (129 aa). Phosphothreonine is present on T495. Phosphoserine occurs at positions 498, 523, and 573. Residues 566–619 form a disordered region; that stretch reads GKDIPAPSPPLPLLSGVPPPPPLPPPPPIKGPFPPPPPLPLAAPLPHSVPDSSA. The span at 571–608 shows a compositional bias: pro residues; the sequence is APSPPLPLLSGVPPPPPLPPPPPIKGPFPPPPPLPLAA. The interval 612-807 is interaction with ROCK1; that stretch reads HSVPDSSALP…AEPLFDLKVG (196 aa). The 398-residue stretch at 616–1013 folds into the FH2 domain; the sequence is DSSALPTKRK…YRERNKTRGR (398 aa). Phosphothreonine is present on T690. Residues 884–921 are a coiled coil; that stretch reads LTRCAKVDFEQLTENLGQLERRSRAAEESLRSLAKHEL. The interval 1020–1143 is disordered; sequence KFSGVAGEAP…NRKSLRRTLK (124 aa). A compositionally biased stretch (low complexity) spans 1028–1041; sequence APSNPSVPVAVSSG. Positions 1053-1133 constitute a DAD domain; the sequence is MKSLLTSRPE…AARERKRSRG (81 aa). The span at 1073–1089 shows a compositional bias: polar residues; the sequence is MVQSSSPIMPTVGPSTA. The span at 1127-1142 shows a compositional bias: basic residues; the sequence is ERKRSRGNRKSLRRTL.

Belongs to the formin homology family. In terms of assembly, self-associates via the FH2 domain. Binds to F-actin via its N-terminus. Binds to the cytoplasmic domain of CD21 via its C-terminus. Interacts with ROCK1 in a Src-dependent manner. Post-translationally, phosphorylated by ROCK1. In terms of tissue distribution, ubiquitous. Highly expressed in spleen.

Its subcellular location is the cytoplasm. The protein localises to the cytoskeleton. It is found in the cell projection. The protein resides in the bleb. In terms of biological role, required for the assembly of F-actin structures, such as stress fibers. Depends on the Rho-ROCK cascade for its activity. Contributes to the coordination of microtubules with actin fibers and plays a role in cell elongation. Acts synergistically with ROCK1 to promote SRC-dependent non-apoptotic plasma membrane blebbing. In Homo sapiens (Human), this protein is FH1/FH2 domain-containing protein 1 (FHOD1).